The following is a 258-amino-acid chain: 5'-nucleotidase SurE (258 aa).

Asp-14, Asp-15, Ser-45, and Asn-101 together coordinate a divalent metal cation.

It belongs to the SurE nucleotidase family. It depends on a divalent metal cation as a cofactor.

It localises to the cytoplasm. The enzyme catalyses a ribonucleoside 5'-phosphate + H2O = a ribonucleoside + phosphate. In terms of biological role, nucleotidase that shows phosphatase activity on nucleoside 5'-monophosphates. The chain is 5'-nucleotidase SurE from Chlorobium limicola (strain DSM 245 / NBRC 103803 / 6330).